The primary structure comprises 211 residues: WW domain-containing protein WWM1 (211 aa).

In terms of domain architecture, WW spans 9-43; that stretch reads PQVPSGWKAVFDDEYQTWYYVDLSTNSSQWEPPRG. A disordered region spans residues 32 to 116; sequence STNSSQWEPP…QRYYPQQAPM (85 aa). Residues lysine 50 and lysine 60 each participate in a glycyl lysine isopeptide (Lys-Gly) (interchain with G-Cter in ubiquitin) cross-link. Serine 75 is modified (phosphoserine). A Phosphothreonine modification is found at threonine 78. A compositionally biased stretch (low complexity) spans 80-116; sequence QVQAGAQAQQPRYYQPQQPQYPQYPQQQRYYPQQAPM.

In terms of assembly, interacts with metacaspase MCA1.

The protein resides in the cytoplasm. Its subcellular location is the nucleus. It localises to the mitochondrion. In terms of biological role, involved in apoptosis. May play a role in nuclear function controlling cellular proliferation coupled to mitochondrial biogenesis. Causes impaired growth when overexpressed. This chain is WW domain-containing protein WWM1 (WWM1), found in Saccharomyces cerevisiae (strain ATCC 204508 / S288c) (Baker's yeast).